The primary structure comprises 437 residues: Nuclear hormone receptor family member nhr-100 (437 aa).

A DNA-binding region (nuclear receptor) is located at residues 21 to 96; it reads DTSCLVCGDP…VGMDANAVRS (76 aa). NR C4-type zinc fingers lie at residues 24–44 and 60–79; these read CLVC…CNGC and CSFN…CRAC. Residues 141–409 form the NR LBD domain; sequence QTKEIIAHML…SGGGLPYDIH (269 aa).

This sequence belongs to the nuclear hormone receptor family.

It localises to the nucleus. Functionally, orphan nuclear receptor. The chain is Nuclear hormone receptor family member nhr-100 (nhr-100) from Caenorhabditis elegans.